Reading from the N-terminus, the 535-residue chain is Glutamate--cysteine ligase (535 aa).

Belongs to the glutamate--cysteine ligase type 1 family. Type 1 subfamily.

It carries out the reaction L-cysteine + L-glutamate + ATP = gamma-L-glutamyl-L-cysteine + ADP + phosphate + H(+). Its pathway is sulfur metabolism; glutathione biosynthesis; glutathione from L-cysteine and L-glutamate: step 1/2. This is Glutamate--cysteine ligase from Pseudomonas syringae pv. syringae.